The chain runs to 117 residues: Large ribosomal subunit protein bL20 (117 aa).

The protein belongs to the bacterial ribosomal protein bL20 family.

Binds directly to 23S ribosomal RNA and is necessary for the in vitro assembly process of the 50S ribosomal subunit. It is not involved in the protein synthesizing functions of that subunit. The chain is Large ribosomal subunit protein bL20 from Lawsonia intracellularis (strain PHE/MN1-00).